We begin with the raw amino-acid sequence, 145 residues long: D-aminoacyl-tRNA deacylase (145 aa).

Residues 137–138 (GP) carry the Gly-cisPro motif, important for rejection of L-amino acids motif.

The protein belongs to the DTD family. As to quaternary structure, homodimer.

It is found in the cytoplasm. The enzyme catalyses glycyl-tRNA(Ala) + H2O = tRNA(Ala) + glycine + H(+). It carries out the reaction a D-aminoacyl-tRNA + H2O = a tRNA + a D-alpha-amino acid + H(+). An aminoacyl-tRNA editing enzyme that deacylates mischarged D-aminoacyl-tRNAs. Also deacylates mischarged glycyl-tRNA(Ala), protecting cells against glycine mischarging by AlaRS. Acts via tRNA-based rather than protein-based catalysis; rejects L-amino acids rather than detecting D-amino acids in the active site. By recycling D-aminoacyl-tRNA to D-amino acids and free tRNA molecules, this enzyme counteracts the toxicity associated with the formation of D-aminoacyl-tRNA entities in vivo and helps enforce protein L-homochirality. The chain is D-aminoacyl-tRNA deacylase from Colwellia psychrerythraea (strain 34H / ATCC BAA-681) (Vibrio psychroerythus).